The primary structure comprises 126 residues: Fluoride-specific ion channel FluC 2 (126 aa).

The next 4 membrane-spanning stretches (helical) occupy residues valine 11–histidine 31, leucine 36–alanine 56, alanine 69–phenylalanine 89, and phenylalanine 93–phenylalanine 113. The Na(+) site is built by glycine 76 and threonine 79.

This sequence belongs to the fluoride channel Fluc/FEX (TC 1.A.43) family.

The protein resides in the cell membrane. The catalysed reaction is fluoride(in) = fluoride(out). Its activity is regulated as follows. Na(+) is not transported, but it plays an essential structural role and its presence is essential for fluoride channel function. Functionally, fluoride-specific ion channel. Important for reducing fluoride concentration in the cell, thus reducing its toxicity. The chain is Fluoride-specific ion channel FluC 2 from Methanosarcina mazei (strain ATCC BAA-159 / DSM 3647 / Goe1 / Go1 / JCM 11833 / OCM 88) (Methanosarcina frisia).